A 275-amino-acid chain; its full sequence is NH(3)-dependent NAD(+) synthetase (275 aa).

46–53 (GISGGQDS) is an ATP binding site. Asp-52 is a Mg(2+) binding site. Deamido-NAD(+) is bound at residue Arg-140. Thr-160 is a binding site for ATP. Glu-165 is a binding site for Mg(2+). Residues Lys-173 and Asp-180 each contribute to the deamido-NAD(+) site. Lys-189 and Thr-211 together coordinate ATP. 260-261 (HK) lines the deamido-NAD(+) pocket.

This sequence belongs to the NAD synthetase family. In terms of assembly, homodimer.

It carries out the reaction deamido-NAD(+) + NH4(+) + ATP = AMP + diphosphate + NAD(+) + H(+). Its pathway is cofactor biosynthesis; NAD(+) biosynthesis; NAD(+) from deamido-NAD(+) (ammonia route): step 1/1. Functionally, catalyzes the ATP-dependent amidation of deamido-NAD to form NAD. Uses ammonia as a nitrogen source. The chain is NH(3)-dependent NAD(+) synthetase from Cronobacter sakazakii (strain ATCC BAA-894) (Enterobacter sakazakii).